The chain runs to 254 residues: Triosephosphate isomerase (254 aa).

10–12 (NWK) contacts substrate. His-96 serves as the catalytic Electrophile. The active-site Proton acceptor is the Glu-168. Substrate is bound by residues Gly-174, Ser-214, and 235–236 (GG).

Belongs to the triosephosphate isomerase family. Homodimer.

It localises to the cytoplasm. The catalysed reaction is D-glyceraldehyde 3-phosphate = dihydroxyacetone phosphate. Its pathway is carbohydrate biosynthesis; gluconeogenesis. It participates in carbohydrate degradation; glycolysis; D-glyceraldehyde 3-phosphate from glycerone phosphate: step 1/1. In terms of biological role, involved in the gluconeogenesis. Catalyzes stereospecifically the conversion of dihydroxyacetone phosphate (DHAP) to D-glyceraldehyde-3-phosphate (G3P). The protein is Triosephosphate isomerase of Rhodopirellula baltica (strain DSM 10527 / NCIMB 13988 / SH1).